A 344-amino-acid polypeptide reads, in one-letter code: Cysteine proteinase 5 (344 aa).

The N-terminal stretch at 1 to 17 is a signal peptide; it reads MKVLSFLCVLLVSVATA. The propeptide at 18–111 is activation peptide; it reads KQQFSELQYR…TQEEKVFTTS (94 aa). 3 cysteine pairs are disulfide-bonded: C133-C174, C167-C207, and C265-C333. C136 is a catalytic residue. H272 is a catalytic residue. The N-linked (GlcNAc...) asparagine glycan is linked to N297. N311 is an active-site residue.

It belongs to the peptidase C1 family. Post-translationally, glycosylated; contains GlcNAc-alpha-1-P-Ser residues.

The protein localises to the lysosome. This chain is Cysteine proteinase 5 (cprE), found in Dictyostelium discoideum (Social amoeba).